Here is a 358-residue protein sequence, read N- to C-terminus: Plancitoxin-1 (358 aa).

Positions 1–26 (MPSSVIMFTFLALTVLTAVMVGTSEA) are cleaved as a signal peptide. A glycan (N-linked (GlcNAc...) asparagine) is linked at asparagine 274. Histidine 303 is an active-site residue.

The protein belongs to the DNase II family. As to quaternary structure, plancitoxin is a heterodimer of alpha and beta subunits; disulfide-linked by a single disulfide bond. As to expression, venom gland.

It is found in the secreted. It carries out the reaction Endonucleolytic cleavage to nucleoside 3'-phosphates and 3'-phosphooligonucleotide end-products.. In terms of biological role, hydrolyzes DNA with an optimum pH of 7.2. Is potently hepatotoxic. It induces caspase-independent apoptosis (on rat liver cells) through the following procedure: binding to a specific receptor in the cytoplasmic membrane, entering the cell, entering the nucleus and degrading DNA. The protein is Plancitoxin-1 of Acanthaster planci (Crown-of-thorns starfish).